Reading from the N-terminus, the 139-residue chain is Dehydrin DHN1 (139 aa).

The segment at Met1–His139 is disordered. Residues Gly23–Gly42 are compositionally biased toward gly residues. Over residues Arg49–Leu58 the composition is skewed to basic and acidic residues. The segment covering Arg59–Ser68 has biased composition (low complexity). Residues Lys83–Ala98 show a composition bias toward basic and acidic residues. Over residues Ala99–Gly109 the composition is skewed to low complexity. Over residues Thr120–His139 the composition is skewed to basic and acidic residues.

It belongs to the plant dehydrin family.

This is Dehydrin DHN1 (DHN1) from Hordeum vulgare (Barley).